The following is a 115-amino-acid chain: MYQAKRERMIGKKILGERYVTVSEAAEIMYNRAQIGELSYEQGCALDYLQKFAKLDKEEAKKLVEELISLGIDEKTAVKIADILPEDLDDLRAIYYKRELPENAEEILEIVRKYI.

It belongs to the eukaryotic RPB4 RNA polymerase subunit family. Part of the RNA polymerase complex. Forms a stalk with Rpo7 that extends from the main structure.

Its subcellular location is the cytoplasm. It carries out the reaction RNA(n) + a ribonucleoside 5'-triphosphate = RNA(n+1) + diphosphate. DNA-dependent RNA polymerase (RNAP) catalyzes the transcription of DNA into RNA using the four ribonucleoside triphosphates as substrates. This subunit is less well bound than the others. This is DNA-directed RNA polymerase subunit Rpo4 from Methanocaldococcus jannaschii (strain ATCC 43067 / DSM 2661 / JAL-1 / JCM 10045 / NBRC 100440) (Methanococcus jannaschii).